The chain runs to 163 residues: GSEIKEYAAHLIPEGGFKAIPQLFGNGWVVVGDAAQLNNAVHREGSNLAMTSGLMAGEAIFQIKSRGGLMTKRNLSLYKGMLGKSFVMKDLMKHKDLPSLLHTDSHNFFMTYPTLISQAAQNFVRVDGAPKINTEKATAASFINARSRWGLISDAVRSAVSWR.

Belongs to the ETF-QO/FixC family. FAD serves as cofactor.

Its function is as follows. Could be required for the formation of a functional nitrogenase Fe protein. Probably accepts electrons from FixA/FixB and reduces a quinone. The polypeptide is Protein FixC (fixC) (Rhizobium leguminosarum).